Consider the following 817-residue polypeptide: E3 ubiquitin-protein ligase TRIM9 (817 aa).

An RING-type zinc finger spans residues 10–50; it reads CPVCGSFYREPIILPCSHNLCQACARNILVQTPESESPQSR. Threonine 41 is modified (phosphothreonine). Serine 44, serine 46, serine 49, and serine 53 each carry phosphoserine. B box-type zinc fingers lie at residues 163-212 and 224-266; these read AAAL…LVPP and RKVS…VKAL. The Zn(2+) site is built by cysteine 168, cysteine 171, cysteine 193, histidine 198, cysteine 229, histidine 232, cysteine 252, and histidine 258. Residues 273–340 are a coiled coil; it reads HKSQLSQALN…KAQLLARVNK (68 aa). Residues 374-432 form the COS domain; it reads IKENDPSGFLQISDALIRRVHLTEDQWGKGTLTPRMTTDFDLSLDNSPLLQSIHQLDFV. The Fibronectin type-III domain occupies 440–535; it reads VPATPILQLE…KTLVLQTSEA (96 aa). Residues 535 to 557 form a disordered region; sequence AAGAHETKPMKDTDSEEQTLPFP. The span at 537-547 shows a compositional bias: basic and acidic residues; that stretch reads GAHETKPMKDT. One can recognise a B30.2/SPRY domain in the interval 613–794; that stretch reads ETQSASYSQL…VQVSLWAPGL (182 aa).

It belongs to the TRIM/RBCC family. As to quaternary structure, interacts with SNAP25. Auto-ubiquitinated. As to expression, brain. Expression is higher in the cerebral cortex and hippocampus (at protein level). Its expression is mainly confined to the central nervous system. The developing neocortex, the dorsal thalamus, the midbrain, the basal area of the hindbrain and spinal cord show high level of expression during embryogenesis. In adult brain, it is detected in the Purkinje cells of the cerebellum, in the hippocampus, and in the cortex.

The protein localises to the cytoplasm. It localises to the cell projection. The protein resides in the dendrite. It is found in the cytoplasmic vesicle. Its subcellular location is the secretory vesicle. The protein localises to the synaptic vesicle. It localises to the synapse. The protein resides in the cytoskeleton. The catalysed reaction is S-ubiquitinyl-[E2 ubiquitin-conjugating enzyme]-L-cysteine + [acceptor protein]-L-lysine = [E2 ubiquitin-conjugating enzyme]-L-cysteine + N(6)-ubiquitinyl-[acceptor protein]-L-lysine.. The protein operates within protein modification; protein ubiquitination. In terms of biological role, E3 ubiquitin-protein ligase which ubiquitinates itself in cooperation with an E2 enzyme UBE2D2/UBC4 and serves as a targeting signal for proteasomal degradation. May play a role in regulation of neuronal functions. May act as a regulator of synaptic vesicle exocytosis by controlling the availability of SNAP25 for the SNARE complex formation. This Mus musculus (Mouse) protein is E3 ubiquitin-protein ligase TRIM9 (Trim9).